Reading from the N-terminus, the 1295-residue chain is Serine protease pet autotransporter (1295 aa).

An N-terminal signal peptide occupies residues 1 to 52 (MNKIYSIKYSAATGGLIAVSELAKKVICKTNRKISAALLSLAVISYTNIIYA). In terms of domain architecture, Peptidase S6 spans 54 to 304 (NMDISKAWAR…TPFDSKTTNE (251 aa)). Catalysis depends on charge relay system residues H124, D153, and S260. The Autotransporter domain occupies 1029–1295 (DINGEAGAWA…AINANFRYSF (267 aa)).

In terms of processing, cleaved to release the mature protein from the outer membrane.

It is found in the periplasm. It localises to the secreted. The protein localises to the cell surface. Its subcellular location is the cell outer membrane. With respect to regulation, inhibition of cytotoxic activity by phenylmethylsulfonyl fluoride. In terms of biological role, serine protease with enterotoxic and cytotoxic activity. Internalization into the host cell is required for the induction of cytopathic effects. However, the serine activity is not necessary for secretion and internalization into the host cell. The polypeptide is Serine protease pet autotransporter (pet) (Escherichia coli O44:H18 (strain 042 / EAEC)).